Consider the following 66-residue polypeptide: MKQGTVKWFNAEKGFGFIEVEGENDVFVHFSAINQDGYKSLEEGQAVEFEVVEGDRGPQAANVVKL.

In terms of domain architecture, CSD spans Met1 to Leu66.

Its subcellular location is the cytoplasm. Involved in cold stress response. This Staphylococcus aureus (strain USA300) protein is Cold shock protein CspA (cspA).